The sequence spans 970 residues: Villin-3 (970 aa).

Gelsolin-like repeat units lie at residues 31-111 (AVPV…ERFL), 151-219 (TVHV…EDGK), 273-339 (VLTR…TVIF), 416-484 (KFYS…PAEF), 536-576 (AIQV…QELA), and 643-714 (NFTQ…PQFF). The tract at residues 741-908 (DGVKPKLDKP…EGQPENEEGL (168 aa)) is disordered. Polar residues predominate over residues 755 to 778 (TTSSSHTGRSSVPEKSQRSRSMSF). The segment covering 833 to 842 (AASIAAISAS) has biased composition (low complexity). A compositionally biased stretch (polar residues) spans 878–893 (KDSTPSKDSPTVTPTI). One can recognise an HP domain in the interval 905 to 970 (EEGLPVYPYE…NRLKIALQLF (66 aa)).

It belongs to the villin/gelsolin family. Expressed in roots, young leaves, and inflorescences, mostly in the vasculature of roots, leaves, and filaments of the anthers and in epidermal cells of the elongation zone and root hairs. Also detected in guard cells.

It is found in the cytoplasm. The protein localises to the cytoskeleton. Functionally, ca(2+)-regulated actin-binding protein. Binds actin microfilaments (MFs). Involved in actin filament bundling, severing and capping. Caps the barbed end of actin filaments and is able to sever them in a calcium-dependent manner. MF severing is promoted by VLN1. The protein is Villin-3 of Oryza sativa subsp. japonica (Rice).